The sequence spans 201 residues: uncharacterized protein (201 aa).

The signal sequence occupies residues 1–28; the sequence is MMTFKNLRYGLSSSVVLAASLFSVLSYA.

Belongs to the fimbrial protein family.

Its subcellular location is the fimbrium. Functionally, part of the yadCKLM-htrE-yadVN fimbrial operon. Could contribute to adhesion to various surfaces in specific environmental niches. This is an uncharacterized protein from Escherichia coli (strain K12).